The primary structure comprises 1372 residues: DNA-directed RNA polymerase subunit beta' (1372 aa).

Zn(2+) is bound by residues C69, C71, C84, and C87. D460, D462, and D464 together coordinate Mg(2+). Zn(2+)-binding residues include C808, C882, C889, and C892.

The protein belongs to the RNA polymerase beta' chain family. The RNAP catalytic core consists of 2 alpha, 1 beta, 1 beta' and 1 omega subunit. When a sigma factor is associated with the core the holoenzyme is formed, which can initiate transcription. Requires Mg(2+) as cofactor. Zn(2+) serves as cofactor.

The enzyme catalyses RNA(n) + a ribonucleoside 5'-triphosphate = RNA(n+1) + diphosphate. In terms of biological role, DNA-dependent RNA polymerase catalyzes the transcription of DNA into RNA using the four ribonucleoside triphosphates as substrates. This chain is DNA-directed RNA polymerase subunit beta', found in Rickettsia typhi (strain ATCC VR-144 / Wilmington).